The primary structure comprises 982 residues: Probable DNA-directed RNA polymerase (982 aa).

The protein belongs to the RNA polymerase beta chain family.

The catalysed reaction is RNA(n) + a ribonucleoside 5'-triphosphate = RNA(n+1) + diphosphate. Functionally, the presence of the two linear plasmids, termed pGKL1 and pGKL2, in strains of Kluyveromyces lactis confers the killer phenotype to the host cell, by promoting the secretion of a toxin able to inhibit the growth of sensitive strains. In Kluyveromyces lactis (strain ATCC 8585 / CBS 2359 / DSM 70799 / NBRC 1267 / NRRL Y-1140 / WM37) (Yeast), this protein is Probable DNA-directed RNA polymerase.